A 652-amino-acid polypeptide reads, in one-letter code: MTRDIVIIGGGVIGLAIAVELKLRGTKVTVLCRDFPAAAAHAAAGMLAPDAEEITDEAMKSLCWRSRSLYPEWTSKLEDLTGLNTGYWPCGILAPVYEGQESKGVRIQENKGESPAYWLEKAVIHQYQPGLGEDVVGGWWYPEDAQVNNQALARVLWAAAESLGVELNDGITVEGLLQQQGQVVGVQTNTGIIQAEHYVLATGAWANELLPLPVTPRKGQMLRVRVPESVPELPLKRVLFGENIYIVPRRDRSIIIGATSEDVGFTPHNTPAGIQTLLQGAIRLYPQLQDYPIQEFWWGFRPATPDELPILGTSHCANLTLATGHYRNGILLAPITAALIADFIVEQKSDPLLSHFHYSRFQKQASTTPMFTHSANFSNGHAKNPPLPTLDSSLIIAGKSFHSRLMTGTGKYRSIEEMQQSVVASGCEIVTVAVRRVQTKAPGHEGLAEALDWSRIWMLPNTAGCQTAEEAIRVARLGREMAKLLGQEDNNFVKLEVIPDPKYLLPDPIGTLQAAEQLVKEGFAVLPYINADPMLAKRLEDVGCATVMPLASPIGSGQGLKTTANIQIIIENAKIPVVVDAGIGAPSEASQAMELGADALLINSAIALAQNPAAMAQAMNLATVAGRLAYLAGRMPIKTYASASSPVTGTIS.

The tract at residues methionine 1–serine 366 is thiO. Residues isoleucine 5–valine 19 and alanine 44–methionine 46 each bind FAD. Glutamate 52 is a binding site for glycine. Valine 173 is an FAD binding site. Residues arginine 301 and arginine 327 each coordinate glycine. Histidine 325 to leucine 331 lines the FAD pocket. The segment at serine 393–serine 652 is thiG. The active-site Schiff-base intermediate with DXP is the lysine 494. 1-deoxy-D-xylulose 5-phosphate contacts are provided by residues glycine 555, alanine 581–glycine 582, and asparagine 603–serine 604.

In the N-terminal section; belongs to the DAO family. ThiO subfamily. The protein in the C-terminal section; belongs to the ThiG family. Interacts with ThiH and ThiS. The cofactor is FAD.

It is found in the cytoplasm. It carries out the reaction glycine + O2 + H2O = glyoxylate + H2O2 + NH4(+). It catalyses the reaction [ThiS sulfur-carrier protein]-C-terminal-Gly-aminoethanethioate + 2-iminoacetate + 1-deoxy-D-xylulose 5-phosphate = [ThiS sulfur-carrier protein]-C-terminal Gly-Gly + 2-[(2R,5Z)-2-carboxy-4-methylthiazol-5(2H)-ylidene]ethyl phosphate + 2 H2O + H(+). The protein operates within cofactor biosynthesis; thiamine diphosphate biosynthesis. Catalyzes the FAD-dependent oxidative deamination of glycine. Is essential for thiamine biosynthesis since the oxidation of glycine catalyzed by ThiO generates the glycine imine intermediate (dehydroglycine) required for the biosynthesis of the thiazole ring of thiamine pyrophosphate. In terms of biological role, catalyzes the rearrangement of 1-deoxy-D-xylulose 5-phosphate (DXP) to produce the thiazole phosphate moiety of thiamine. Sulfur is provided by the thiocarboxylate moiety of the carrier protein ThiS. In vitro, sulfur can be provided by H(2)S. In Trichormus variabilis (strain ATCC 29413 / PCC 7937) (Anabaena variabilis), this protein is Bifunctional protein ThiO/ThiG (thiO/thiG).